A 430-amino-acid chain; its full sequence is Serine--tRNA ligase (430 aa).

231–233 (TSE) contacts L-serine. An ATP-binding site is contributed by 262–264 (RSE). Glutamate 285 is a binding site for L-serine. ATP is bound at residue 349–352 (EISS). Serine 385 contacts L-serine.

It belongs to the class-II aminoacyl-tRNA synthetase family. Type-1 seryl-tRNA synthetase subfamily. As to quaternary structure, homodimer. The tRNA molecule binds across the dimer.

It is found in the cytoplasm. It catalyses the reaction tRNA(Ser) + L-serine + ATP = L-seryl-tRNA(Ser) + AMP + diphosphate + H(+). The enzyme catalyses tRNA(Sec) + L-serine + ATP = L-seryl-tRNA(Sec) + AMP + diphosphate + H(+). It participates in aminoacyl-tRNA biosynthesis; selenocysteinyl-tRNA(Sec) biosynthesis; L-seryl-tRNA(Sec) from L-serine and tRNA(Sec): step 1/1. In terms of biological role, catalyzes the attachment of serine to tRNA(Ser). Is also able to aminoacylate tRNA(Sec) with serine, to form the misacylated tRNA L-seryl-tRNA(Sec), which will be further converted into selenocysteinyl-tRNA(Sec). This Ruegeria pomeroyi (strain ATCC 700808 / DSM 15171 / DSS-3) (Silicibacter pomeroyi) protein is Serine--tRNA ligase.